The following is a 307-amino-acid chain: Small ribosomal subunit protein uS3 (307 aa).

The KH type-2 domain occupies 17-86; sequence MDEYFAEQLN…NPQIDAQEVK (70 aa). Basic and acidic residues predominate over residues 201-226; it reads IEEPAEKPAEKQVEKPAVAPKKEAAK. The segment at 201 to 265 is disordered; sequence IEEPAEKPAE…QVEASEDFEE (65 aa). Acidic residues predominate over residues 240–265; sequence PTEEPEVAEPEEAEEAQVEASEDFEE.

The protein belongs to the universal ribosomal protein uS3 family. Part of the 30S ribosomal subunit.

Binds the lower part of the 30S subunit head. The sequence is that of Small ribosomal subunit protein uS3 from Methanosarcina mazei (strain ATCC BAA-159 / DSM 3647 / Goe1 / Go1 / JCM 11833 / OCM 88) (Methanosarcina frisia).